A 79-amino-acid chain; its full sequence is Putative membrane protein insertion efficiency factor (79 aa).

It belongs to the UPF0161 family.

The protein resides in the cell inner membrane. In terms of biological role, could be involved in insertion of integral membrane proteins into the membrane. The polypeptide is Putative membrane protein insertion efficiency factor (Prochlorococcus marinus (strain SARG / CCMP1375 / SS120)).